Here is a 271-residue protein sequence, read N- to C-terminus: Acetyl-coenzyme A carboxylase carboxyl transferase subunit alpha (271 aa).

The 247-residue stretch at 1 to 247 (MSRELIRTAD…KKTILEALGE (247 aa)) folds into the CoA carboxyltransferase C-terminal domain.

It belongs to the AccA family. In terms of assembly, acetyl-CoA carboxylase is a heterohexamer composed of biotin carboxyl carrier protein (AccB), biotin carboxylase (AccC) and two subunits each of ACCase subunit alpha (AccA) and ACCase subunit beta (AccD).

The protein resides in the cytoplasm. It catalyses the reaction N(6)-carboxybiotinyl-L-lysyl-[protein] + acetyl-CoA = N(6)-biotinyl-L-lysyl-[protein] + malonyl-CoA. It functions in the pathway lipid metabolism; malonyl-CoA biosynthesis; malonyl-CoA from acetyl-CoA: step 1/1. In terms of biological role, component of the acetyl coenzyme A carboxylase (ACC) complex. First, biotin carboxylase catalyzes the carboxylation of biotin on its carrier protein (BCCP) and then the CO(2) group is transferred by the carboxyltransferase to acetyl-CoA to form malonyl-CoA. In Clostridium perfringens (strain 13 / Type A), this protein is Acetyl-coenzyme A carboxylase carboxyl transferase subunit alpha.